Here is a 172-residue protein sequence, read N- to C-terminus: Trypsin inhibitor DE-3 (172 aa).

Disulfide bonds link Cys39–Cys83 and Cys132–Cys139.

Belongs to the protease inhibitor I3 (leguminous Kunitz-type inhibitor) family.

Inhibition of trypsin. In Erythrina variegata (Indian coral tree), this protein is Trypsin inhibitor DE-3.